Here is a 366-residue protein sequence, read N- to C-terminus: 3-dehydroquinate synthase (366 aa).

NAD(+)-binding positions include 73–78 (DGERAK), 107–111 (GVVGD), 131–132 (TT), lysine 144, and lysine 153. 3 residues coordinate Zn(2+): glutamate 186, histidine 249, and histidine 266.

It belongs to the sugar phosphate cyclases superfamily. Dehydroquinate synthase family. Co(2+) serves as cofactor. Zn(2+) is required as a cofactor. It depends on NAD(+) as a cofactor.

It localises to the cytoplasm. It carries out the reaction 7-phospho-2-dehydro-3-deoxy-D-arabino-heptonate = 3-dehydroquinate + phosphate. It participates in metabolic intermediate biosynthesis; chorismate biosynthesis; chorismate from D-erythrose 4-phosphate and phosphoenolpyruvate: step 2/7. Its function is as follows. Catalyzes the conversion of 3-deoxy-D-arabino-heptulosonate 7-phosphate (DAHP) to dehydroquinate (DHQ). The chain is 3-dehydroquinate synthase from Koribacter versatilis (strain Ellin345).